We begin with the raw amino-acid sequence, 265 residues long: uncharacterized protein (265 aa).

Glu-47 is a catalytic residue.

The protein belongs to the PhzF family.

This is an uncharacterized protein from Halalkalibacterium halodurans (strain ATCC BAA-125 / DSM 18197 / FERM 7344 / JCM 9153 / C-125) (Bacillus halodurans).